We begin with the raw amino-acid sequence, 355 residues long: Protein-glutamate methylesterase/protein-glutamine glutaminase (355 aa).

In terms of domain architecture, Response regulatory spans Lys4–Met121. Asp55 is subject to 4-aspartylphosphate. The CheB-type methylesterase domain occupies Leu156–Asn348. Residues Ser168, His194, and Asp290 contribute to the active site.

Belongs to the CheB family. Phosphorylated by CheA. Phosphorylation of the N-terminal regulatory domain activates the methylesterase activity.

It is found in the cytoplasm. It catalyses the reaction [protein]-L-glutamate 5-O-methyl ester + H2O = L-glutamyl-[protein] + methanol + H(+). The catalysed reaction is L-glutaminyl-[protein] + H2O = L-glutamyl-[protein] + NH4(+). Its function is as follows. Involved in chemotaxis. Part of a chemotaxis signal transduction system that modulates chemotaxis in response to various stimuli. Catalyzes the demethylation of specific methylglutamate residues introduced into the chemoreceptors (methyl-accepting chemotaxis proteins or MCP) by CheR. Also mediates the irreversible deamidation of specific glutamine residues to glutamic acid. The protein is Protein-glutamate methylesterase/protein-glutamine glutaminase of Methylobacillus flagellatus (strain ATCC 51484 / DSM 6875 / VKM B-1610 / KT).